The sequence spans 659 residues: Endoglucanase A (659 aa).

Residues methionine 1–glutamate 500 are catalytic. The active-site Nucleophile is aspartate 101. The disordered stretch occupies residues asparagine 413 to asparagine 433. Active-site residues include histidine 419, aspartate 457, and glutamate 466. The CBM3 domain maps to glutamine 501–aspartate 658.

Belongs to the glycosyl hydrolase 9 (cellulase E) family.

It is found in the secreted. It catalyses the reaction Endohydrolysis of (1-&gt;4)-beta-D-glucosidic linkages in cellulose, lichenin and cereal beta-D-glucans.. Its activity is regulated as follows. Strongly inhibited by ZnCl(2) and by EDTA. In terms of biological role, active on carboxymethyl cellulose and carboxymethyl cellulose-RBB but not avicel, xanthan gum, carboxymethyl-curdulan-RBB or carboxymethyl-xylan-RBB. In Bacillus pumilus (Bacillus mesentericus), this protein is Endoglucanase A (eglA).